The sequence spans 511 residues: 2-isopropylmalate synthase (511 aa).

A Pyruvate carboxyltransferase domain is found at 6 to 269 (IIIFDTTLRD…YTDIKCENIF (264 aa)). Mn(2+)-binding residues include Asp15, His203, His205, and Asn239. The regulatory domain stretch occupies residues 394-511 (VLEKLSVISG…SLKVEERKMA (118 aa)).

The protein belongs to the alpha-IPM synthase/homocitrate synthase family. LeuA type 1 subfamily. As to quaternary structure, homodimer. The cofactor is Mn(2+).

The protein resides in the cytoplasm. It catalyses the reaction 3-methyl-2-oxobutanoate + acetyl-CoA + H2O = (2S)-2-isopropylmalate + CoA + H(+). It functions in the pathway amino-acid biosynthesis; L-leucine biosynthesis; L-leucine from 3-methyl-2-oxobutanoate: step 1/4. Catalyzes the condensation of the acetyl group of acetyl-CoA with 3-methyl-2-oxobutanoate (2-ketoisovalerate) to form 3-carboxy-3-hydroxy-4-methylpentanoate (2-isopropylmalate). The sequence is that of 2-isopropylmalate synthase from Campylobacter jejuni subsp. jejuni serotype O:2 (strain ATCC 700819 / NCTC 11168).